Here is a 96-residue protein sequence, read N- to C-terminus: Co-chaperonin GroES (96 aa).

This sequence belongs to the GroES chaperonin family. Heptamer of 7 subunits arranged in a ring. Interacts with the chaperonin GroEL.

The protein localises to the cytoplasm. In terms of biological role, together with the chaperonin GroEL, plays an essential role in assisting protein folding. The GroEL-GroES system forms a nano-cage that allows encapsulation of the non-native substrate proteins and provides a physical environment optimized to promote and accelerate protein folding. GroES binds to the apical surface of the GroEL ring, thereby capping the opening of the GroEL channel. This Herminiimonas arsenicoxydans protein is Co-chaperonin GroES.